The sequence spans 237 residues: MRFSPQLEQGRLLVRYKRFLADIETDSGELLTIHCPNTGSMLNCMMPGGRVWFSRSNDPKRKLPGTWEISETPQGRLACINTGRANTLVEEALRAGVISELTGFTALKREVAYGQEKSRVDFRLEYPDGYLYLEVKSVTLGFDGSSVAAFPDAVTQRGARHLRELATLAREGVRAVLLYCVNLTGIDAVRPAQEIDPAYAAALREAIDAGVQILAYGAQLTSEEIFIDRRLQVHGLD.

This sequence belongs to the SfsA family.

In Pseudomonas syringae pv. syringae (strain B728a), this protein is Sugar fermentation stimulation protein homolog.